A 346-amino-acid chain; its full sequence is Bifunctional phosphatase IMPL2, chloroplastic (346 aa).

The transit peptide at 1–61 directs the protein to the chloroplast; it reads MLAQSHFFSK…VSRRRFCLTM (61 aa). 3 residues coordinate Mg(2+): Glu-147, Asp-165, and Asp-168. Glu-147 serves as a coordination point for substrate. Residues 167–170, 263–265, Glu-282, and Asp-289 each bind substrate; these read IDGT and GCD. Residue Asp-289 coordinates Mg(2+).

This sequence belongs to the inositol monophosphatase superfamily. The cofactor is Mg(2+). In terms of tissue distribution, ubiquitous. High expression in roots. Expressed in pistil and seed endosperm.

It localises to the plastid. It is found in the chloroplast. It catalyses the reaction a myo-inositol phosphate + H2O = myo-inositol + phosphate. The catalysed reaction is L-histidinol phosphate + H2O = L-histidinol + phosphate. The enzyme catalyses beta-L-galactose 1-phosphate + H2O = L-galactose + phosphate. It functions in the pathway amino-acid biosynthesis; L-histidine biosynthesis; L-histidine from 5-phospho-alpha-D-ribose 1-diphosphate: step 8/9. It participates in polyol metabolism; myo-inositol biosynthesis; myo-inositol from D-glucose 6-phosphate: step 2/2. Phosphatase required for histidine production. Also acts on L-galactose 1-phosphate (L-Gal 1-P), D-myoinositol 3-phosphate (D-Ins 3-P) and D-myoinositol 1-phosphate (D-Ins 1-P). This chain is Bifunctional phosphatase IMPL2, chloroplastic (HISN7), found in Arabidopsis thaliana (Mouse-ear cress).